A 235-amino-acid chain; its full sequence is Putative cobalt transport protein CbiM 2 (235 aa).

7 helical membrane-spanning segments follow: residues 8 to 28, 40 to 60, 74 to 94, 107 to 127, 135 to 155, 160 to 180, and 185 to 205; these read LPAI…AYGV, GILP…SLKM, GIGA…IVLI, TLGA…YLIY, LNFY…TYIV, LALA…SSFS, and IFAI…ALLF.

It belongs to the CbiM family. As to quaternary structure, forms an energy-coupling factor (ECF) transporter complex composed of an ATP-binding protein (A component, CbiO), a transmembrane protein (T component, CbiQ) and 2 possible substrate-capture proteins (S components, CbiM and CbiN) of unknown stoichimetry.

Its subcellular location is the cell membrane. It participates in cofactor biosynthesis; adenosylcobalamin biosynthesis. Functionally, part of the energy-coupling factor (ECF) transporter complex CbiMNOQ involved in cobalt import. The sequence is that of Putative cobalt transport protein CbiM 2 from Methanosarcina barkeri (strain Fusaro / DSM 804).